A 225-amino-acid polypeptide reads, in one-letter code: MVQSCSAYGCKNRYDKDKPISFHKFPLKRPLLCKKWEAAVRRAEFKPTKYSSICSDHFSADCFKRECNNKLLKDNAVPTIFAHMEIKKKSGKAVKKEQLPAEPEPVPAVPEIDPAIGLLLPPLYTPSHIAVICDHNYTVEDTVHQRRRIQQLEEQVDKLRKKLKIANQKCRRQERSLEKLEREVSEYREAKGSGYVIFPGNYYEVLNENEYKELTPEITYKEIIL.

The THAP-type zinc-finger motif lies at 5–57 (CSAYGCKNRYDKDKPISFHKFPLKRPLLCKKWEAAVRRAEFKPTKYSSICSDH). The stretch at 139–194 (VEDTVHQRRRIQQLEEQVDKLRKKLKIANQKCRRQERSLEKLEREVSEYREAKGSG) forms a coiled coil.

This sequence belongs to the THAP1 family.

It is found in the nucleus. It localises to the nucleoplasm. In terms of biological role, DNA-binding transcription regulator that regulates endothelial cell proliferation and G1/S cell-cycle progression. Specifically binds the 5'-[AT]NTNN[GT]GGCA[AGT]-3' core DNA sequence and acts by modulating expression of pRB-E2F cell-cycle target genes. This is THAP domain-containing protein 1 A (thap1-a) from Xenopus laevis (African clawed frog).